Consider the following 126-residue polypeptide: Aspartate 1-decarboxylase (126 aa).

S25 (schiff-base intermediate with substrate; via pyruvic acid) is an active-site residue. S25 bears the Pyruvic acid (Ser) mark. T57 serves as a coordination point for substrate. The Proton donor role is filled by Y58. 73–75 (GAA) contacts substrate.

It belongs to the PanD family. Heterooctamer of four alpha and four beta subunits. It depends on pyruvate as a cofactor. Is synthesized initially as an inactive proenzyme, which is activated by self-cleavage at a specific serine bond to produce a beta-subunit with a hydroxyl group at its C-terminus and an alpha-subunit with a pyruvoyl group at its N-terminus.

The protein resides in the cytoplasm. It carries out the reaction L-aspartate + H(+) = beta-alanine + CO2. It functions in the pathway cofactor biosynthesis; (R)-pantothenate biosynthesis; beta-alanine from L-aspartate: step 1/1. Functionally, catalyzes the pyruvoyl-dependent decarboxylation of aspartate to produce beta-alanine. The sequence is that of Aspartate 1-decarboxylase from Saccharophagus degradans (strain 2-40 / ATCC 43961 / DSM 17024).